We begin with the raw amino-acid sequence, 407 residues long: Argininosuccinate synthase (407 aa).

8–16 lines the ATP pocket; the sequence is AYSGGLDTT. L-citrulline contacts are provided by Tyr86 and Ser91. An ATP-binding site is contributed by Gly116. L-aspartate is bound by residues Thr118, Asn122, and Asp123. Residue Asn122 coordinates L-citrulline. L-citrulline contacts are provided by Arg126, Ser178, Ser187, Glu264, and Tyr276.

Belongs to the argininosuccinate synthase family. Type 1 subfamily. As to quaternary structure, homotetramer.

It is found in the cytoplasm. The catalysed reaction is L-citrulline + L-aspartate + ATP = 2-(N(omega)-L-arginino)succinate + AMP + diphosphate + H(+). It functions in the pathway amino-acid biosynthesis; L-arginine biosynthesis; L-arginine from L-ornithine and carbamoyl phosphate: step 2/3. The sequence is that of Argininosuccinate synthase from Lachnoclostridium phytofermentans (strain ATCC 700394 / DSM 18823 / ISDg) (Clostridium phytofermentans).